The following is a 188-amino-acid chain: Threonylcarbamoyl-AMP synthase (188 aa).

One can recognise a YrdC-like domain in the interval 8-188 (EGAQPGLHAY…DLATGKILRA (181 aa)).

This sequence belongs to the SUA5 family. TsaC subfamily.

The protein localises to the cytoplasm. It carries out the reaction L-threonine + hydrogencarbonate + ATP = L-threonylcarbamoyladenylate + diphosphate + H2O. Functionally, required for the formation of a threonylcarbamoyl group on adenosine at position 37 (t(6)A37) in tRNAs that read codons beginning with adenine. Catalyzes the conversion of L-threonine, HCO(3)(-)/CO(2) and ATP to give threonylcarbamoyl-AMP (TC-AMP) as the acyladenylate intermediate, with the release of diphosphate. The sequence is that of Threonylcarbamoyl-AMP synthase from Thiobacillus denitrificans (strain ATCC 25259 / T1).